Consider the following 241-residue polypeptide: 3-deoxy-D-manno-octulosonic acid kinase (241 aa).

The active site involves Asp171.

The protein belongs to the protein kinase superfamily. KdkA/RfaP family.

It localises to the cell inner membrane. It carries out the reaction an alpha-Kdo-(2-&gt;6)-lipid IVA + ATP = a 4-O-phospho-alpha-Kdo-(2-&gt;6)-lipid IVA + ADP + H(+). It participates in bacterial outer membrane biogenesis; LPS core biosynthesis. Catalyzes the ATP-dependent phosphorylation of the 3-deoxy-D-manno-octulosonic acid (Kdo) residue in Kdo-lipid IV(A) at the 4-OH position. In Haemophilus influenzae (strain PittEE), this protein is 3-deoxy-D-manno-octulosonic acid kinase.